We begin with the raw amino-acid sequence, 963 residues long: VPS35 endosomal protein-sorting factor-like (963 aa).

2 disordered regions span residues 38–71 (ITVTDSKSRRGGRKGSTSSSSSSSSSVAPDPLSS) and 85–111 (ASETPTLPHSVSAGELGRKRKEKEEEV). A compositionally biased stretch (low complexity) spans 52–63 (GSTSSSSSSSSS).

Belongs to the VPS35L family. In terms of assembly, component of the heterotrimeric retriever complex.

Its subcellular location is the endosome. Acts as a component of the retriever complex. The retriever complex is a heterotrimeric complex related to retromer cargo-selective complex (CSC) and essential for retromer-independent retrieval and recycling of numerous cargos such as integrins. The recruitment of the retriever complex to the endosomal membrane involves CCC and WASH complexes. In the endosomes, drives the retrieval and recycling of NxxY-motif-containing cargo proteins by coupling to SNX17, a cargo essential for the homeostatic maintenance of numerous cell surface proteins associated with processes that include cell migration, cell adhesion, nutrient supply and cell signaling. May be involved in copper-dependent atp7a trafficking between the trans-Golgi network and vesicles in the cell periphery. The chain is VPS35 endosomal protein-sorting factor-like (vps35l) from Danio rerio (Zebrafish).